Here is a 203-residue protein sequence, read N- to C-terminus: Small ribosomal subunit protein uS4 (203 aa).

In terms of domain architecture, S4 RNA-binding spans 93–156; it reads RRLDNVVYRL…MKVPAILEAV (64 aa).

The protein belongs to the universal ribosomal protein uS4 family. As to quaternary structure, part of the 30S ribosomal subunit. Contacts protein S5. The interaction surface between S4 and S5 is involved in control of translational fidelity.

Its function is as follows. One of the primary rRNA binding proteins, it binds directly to 16S rRNA where it nucleates assembly of the body of the 30S subunit. Functionally, with S5 and S12 plays an important role in translational accuracy. This chain is Small ribosomal subunit protein uS4, found in Streptococcus pyogenes serotype M49 (strain NZ131).